We begin with the raw amino-acid sequence, 358 residues long: Phosphate acyltransferase (358 aa).

Belongs to the PlsX family. In terms of assembly, homodimer. Probably interacts with PlsY.

The protein resides in the cytoplasm. It catalyses the reaction a fatty acyl-[ACP] + phosphate = an acyl phosphate + holo-[ACP]. Its pathway is lipid metabolism; phospholipid metabolism. Its function is as follows. Catalyzes the reversible formation of acyl-phosphate (acyl-PO(4)) from acyl-[acyl-carrier-protein] (acyl-ACP). This enzyme utilizes acyl-ACP as fatty acyl donor, but not acyl-CoA. The protein is Phosphate acyltransferase of Escherichia fergusonii (strain ATCC 35469 / DSM 13698 / CCUG 18766 / IAM 14443 / JCM 21226 / LMG 7866 / NBRC 102419 / NCTC 12128 / CDC 0568-73).